The primary structure comprises 250 residues: Global transcriptional regulator CodY (250 aa).

Positions 1-146 (MTLLEKTRKL…GATVVGLEIL (146 aa)) are GAF domain. A DNA-binding region (H-T-H motif) is located at residues 194 to 213 (ASKIADKVGITRSVIVNALR).

This sequence belongs to the CodY family.

The protein resides in the cytoplasm. Functionally, DNA-binding global transcriptional regulator which is involved in the adaptive response to starvation and acts by directly or indirectly controlling the expression of numerous genes in response to nutrient availability. During rapid exponential growth, CodY is highly active and represses genes whose products allow adaptation to nutrient depletion. This is Global transcriptional regulator CodY from Caldanaerobacter subterraneus subsp. tengcongensis (strain DSM 15242 / JCM 11007 / NBRC 100824 / MB4) (Thermoanaerobacter tengcongensis).